The sequence spans 171 residues: Shikimate kinase (171 aa).

An ATP-binding site is contributed by 13–18 (GVGKST). A Mg(2+)-binding site is contributed by Ser17. Substrate contacts are provided by Asp35, Arg59, and Gly81. Arg118 provides a ligand contact to ATP. A substrate-binding site is contributed by Arg136. Arg153 provides a ligand contact to ATP.

It belongs to the shikimate kinase family. In terms of assembly, monomer. Requires Mg(2+) as cofactor.

The protein localises to the cytoplasm. It carries out the reaction shikimate + ATP = 3-phosphoshikimate + ADP + H(+). It participates in metabolic intermediate biosynthesis; chorismate biosynthesis; chorismate from D-erythrose 4-phosphate and phosphoenolpyruvate: step 5/7. Its function is as follows. Catalyzes the specific phosphorylation of the 3-hydroxyl group of shikimic acid using ATP as a cosubstrate. The protein is Shikimate kinase of Streptomyces coelicolor (strain ATCC BAA-471 / A3(2) / M145).